Here is an 82-residue protein sequence, read N- to C-terminus: Immediate early response 3-interacting protein 1 (82 aa).

The next 2 membrane-spanning stretches (helical) occupy residues 2–22 (AFTLYSLMQAALLCVNAIAVL) and 62–82 (VMRVPLIIVNSITIVLLLLFG).

The protein belongs to the YOS1 family.

It is found in the endoplasmic reticulum membrane. In terms of biological role, regulator of endoplasmic reticulum secretion that acts as a key determinant of brain size. Required for secretion of extracellular matrix proteins. Required for correct brain development by depositing sufficient extracellular matrix proteins for tissue integrity and the proliferation of neural progenitors. Acts as a regulator of the unfolded protein response (UPR). In Mus musculus (Mouse), this protein is Immediate early response 3-interacting protein 1.